We begin with the raw amino-acid sequence, 278 residues long: MEGHKSGMEAVAVAIPPLHTGESNHRIDSNVSSQCHADPAELSDETQQQSLWHLGLRKIIPSSVPLLKKVSAEFFGTFILIFTVLSTIIMDEQHKSIETLLGIATSAGLAVTVLVLSLIHISGCHLNPAISIAMAVFGHLPSAHLLPYISSQILGAVAASFAVKGLYHPVNPGIVTVPNVGTVEAFFVEFIITFFLLFIITALATDPNAVKELIAVAVGATVMMNILVAGPSTGASMNPARTIGAAIATGRYTQIWVYLVATPLGAIAGTGAYVAIKL.

The next 2 membrane-spanning stretches (helical) occupy residues 70 to 90 and 99 to 119; these read VSAEFFGTFILIFTVLSTIIM and TLLGIATSAGLAVTVLVLSLI. An NPA 1 motif is present at residues 127-129; the sequence is NPA. The next 3 helical transmembrane spans lie at 141 to 163, 185 to 205, and 213 to 233; these read PSAHLLPYISSQILGAVAASFAV, AFFVEFIITFFLLFIITALAT, and LIAVAVGATVMMNILVAGPST. Residues 238–240 carry the NPA 2 motif; the sequence is NPA. Residues 255–275 traverse the membrane as a helical segment; that stretch reads IWVYLVATPLGAIAGTGAYVA.

The protein belongs to the MIP/aquaporin (TC 1.A.8) family. NIP (TC 1.A.8.12) subfamily. Expressed in leaves and at lower levels in roots and anthers.

The protein resides in the membrane. In terms of biological role, aquaporins facilitate the transport of water and small neutral solutes across cell membranes. In Oryza sativa subsp. japonica (Rice), this protein is Aquaporin NIP3-3 (NIP3-3).